A 240-amino-acid polypeptide reads, in one-letter code: 4-hydroxy-tetrahydrodipicolinate reductase (240 aa).

Residues 8–13 (GSTGKM), 78–80 (GTT), and 102–105 (SANM) contribute to the NAD(+) site. His134 acts as the Proton donor/acceptor in catalysis. His135 contributes to the (S)-2,3,4,5-tetrahydrodipicolinate binding site. Residue Lys138 is the Proton donor of the active site. Residue 144 to 145 (GT) participates in (S)-2,3,4,5-tetrahydrodipicolinate binding.

Belongs to the DapB family.

It is found in the cytoplasm. The enzyme catalyses (S)-2,3,4,5-tetrahydrodipicolinate + NAD(+) + H2O = (2S,4S)-4-hydroxy-2,3,4,5-tetrahydrodipicolinate + NADH + H(+). It carries out the reaction (S)-2,3,4,5-tetrahydrodipicolinate + NADP(+) + H2O = (2S,4S)-4-hydroxy-2,3,4,5-tetrahydrodipicolinate + NADPH + H(+). The protein operates within amino-acid biosynthesis; L-lysine biosynthesis via DAP pathway; (S)-tetrahydrodipicolinate from L-aspartate: step 4/4. Functionally, catalyzes the conversion of 4-hydroxy-tetrahydrodipicolinate (HTPA) to tetrahydrodipicolinate. The protein is 4-hydroxy-tetrahydrodipicolinate reductase of Rickettsia canadensis (strain McKiel).